A 62-amino-acid polypeptide reads, in one-letter code: uncharacterized protein (62 aa).

The tract at residues 1-26 (MGELAASANHGHSPCYPERKGTPGDL) is disordered. Residues 17–26 (PERKGTPGDL) are compositionally biased toward basic and acidic residues.

This is an uncharacterized protein from Homo sapiens (Human).